The sequence spans 164 residues: V-type proton ATPase subunit c' (164 aa).

At 1 to 14 (MSTQLASNIYAPLY) the chain is on the vacuolar side. A helical membrane pass occupies residues 15–37 (APFFGFAGCAAAMVLSCLGAAIG). Topologically, residues 38 to 59 (TAKSGIGIAGIGTFKPELIMKS) are cytoplasmic. Residues 60–80 (LIPVVMSGILAIYGLVVAVLI) traverse the membrane as a helical segment. At 81 to 98 (AGNLSPTEDYTLFNGFMH) the chain is on the vacuolar side. The chain crosses the membrane as a helical span at residues 99–120 (LSCGLCVGFACLSSGYAIGMVG). Over 121–132 (DVGVRKYMHQPR) the chain is Cytoplasmic. Residues 133–158 (LFVGIVLILIFSEVLGLYGMIVALIL) form a helical membrane-spanning segment. The Vacuolar portion of the chain corresponds to 159-164 (NTRGSE).

This sequence belongs to the V-ATPase proteolipid subunit family. As to quaternary structure, V-ATPase is a heteromultimeric enzyme composed of a peripheral catalytic V1 complex (components A to H) attached to an integral membrane V0 proton pore complex (components: a, c, c', c'', d, e, f and VOA1). The decameric c-ring forms the proton-conducting pore, and is composed of eight proteolipid subunits c, one subunit c' and one subunit c''.

It localises to the vacuole membrane. Functionally, proton-conducting pore forming subunit of the V0 complex of vacuolar(H+)-ATPase (V-ATPase), a multisubunit enzyme composed of a peripheral complex (V1) that hydrolyzes ATP and a membrane integral complex (V0) that translocates protons. V-ATPase is responsible for acidifying and maintaining the pH of intracellular compartments. This chain is V-type proton ATPase subunit c' (VMA11), found in Saccharomyces cerevisiae (strain ATCC 204508 / S288c) (Baker's yeast).